Consider the following 64-residue polypeptide: Small ribosomal subunit protein bS21 (64 aa).

The interval 40-64 (PPSVKRKIKSQEAQRRMRRTKRKRF) is disordered. Basic residues predominate over residues 55-64 (RMRRTKRKRF).

It belongs to the bacterial ribosomal protein bS21 family.

The polypeptide is Small ribosomal subunit protein bS21 (Elusimicrobium minutum (strain Pei191)).